Reading from the N-terminus, the 136-residue chain is Sec-independent protein translocase protein TatB (136 aa).

A helical membrane pass occupies residues 2 to 22; the sequence is FGSVGWGELLVLLIVGLVVLG. The tract at residues 107–136 is disordered; that stretch reads VTEPAPTPIVNPELAKPAEPGPTRYDADAT.

The protein belongs to the TatB family. As to quaternary structure, the Tat system comprises two distinct complexes: a TatABC complex, containing multiple copies of TatA, TatB and TatC subunits, and a separate TatA complex, containing only TatA subunits. Substrates initially bind to the TatABC complex, which probably triggers association of the separate TatA complex to form the active translocon.

It is found in the cell membrane. Functionally, part of the twin-arginine translocation (Tat) system that transports large folded proteins containing a characteristic twin-arginine motif in their signal peptide across membranes. Together with TatC, TatB is part of a receptor directly interacting with Tat signal peptides. TatB may form an oligomeric binding site that transiently accommodates folded Tat precursor proteins before their translocation. The chain is Sec-independent protein translocase protein TatB from Mycobacteroides abscessus (strain ATCC 19977 / DSM 44196 / CCUG 20993 / CIP 104536 / JCM 13569 / NCTC 13031 / TMC 1543 / L948) (Mycobacterium abscessus).